An 802-amino-acid polypeptide reads, in one-letter code: Leucine--tRNA ligase (802 aa).

A 'HIGH' region motif is present at residues 39 to 50 (PYPSGAGLHVGH). Positions 574 to 578 (KMSKS) match the 'KMSKS' region motif. Lys577 lines the ATP pocket.

It belongs to the class-I aminoacyl-tRNA synthetase family.

Its subcellular location is the cytoplasm. It carries out the reaction tRNA(Leu) + L-leucine + ATP = L-leucyl-tRNA(Leu) + AMP + diphosphate. This chain is Leucine--tRNA ligase, found in Macrococcus caseolyticus (strain JCSC5402) (Macrococcoides caseolyticum).